Here is a 230-residue protein sequence, read N- to C-terminus: Large ribosomal subunit protein uL1 (230 aa).

This sequence belongs to the universal ribosomal protein uL1 family. Part of the 50S ribosomal subunit.

Functionally, binds directly to 23S rRNA. The L1 stalk is quite mobile in the ribosome, and is involved in E site tRNA release. In terms of biological role, protein L1 is also a translational repressor protein, it controls the translation of the L11 operon by binding to its mRNA. The chain is Large ribosomal subunit protein uL1 from Limosilactobacillus reuteri subsp. reuteri (strain JCM 1112) (Lactobacillus reuteri).